A 157-amino-acid chain; its full sequence is S-ribosylhomocysteine lyase (157 aa).

Fe cation-binding residues include His-54, His-58, and Cys-126.

This sequence belongs to the LuxS family. As to quaternary structure, homodimer. The cofactor is Fe cation.

It carries out the reaction S-(5-deoxy-D-ribos-5-yl)-L-homocysteine = (S)-4,5-dihydroxypentane-2,3-dione + L-homocysteine. Its function is as follows. Involved in the synthesis of autoinducer 2 (AI-2) which is secreted by bacteria and is used to communicate both the cell density and the metabolic potential of the environment. The regulation of gene expression in response to changes in cell density is called quorum sensing. Catalyzes the transformation of S-ribosylhomocysteine (RHC) to homocysteine (HC) and 4,5-dihydroxy-2,3-pentadione (DPD). The protein is S-ribosylhomocysteine lyase of Bacillus licheniformis (strain ATCC 14580 / DSM 13 / JCM 2505 / CCUG 7422 / NBRC 12200 / NCIMB 9375 / NCTC 10341 / NRRL NRS-1264 / Gibson 46).